The chain runs to 623 residues: Myosin light chain kinase 2, skeletal/cardiac muscle (623 aa).

2 disordered regions span residues 1–179 (MATE…PSCP) and 204–251 (GVPV…QGDT). Alanine 2 carries the N-acetylalanine modification. Low complexity predominate over residues 20-31 (APKAAAGEGPPA). Composition is skewed to basic and acidic residues over residues 32-43 (AEKDPGPPDPQK) and 49-89 (DPEK…EKGD). Residues 90–102 (GASAQPSASSQGP) show a composition bias toward low complexity. Residues 150-159 (GEAKEQKKVA) are compositionally biased toward basic and acidic residues. Serine 169, serine 175, and serine 177 each carry phosphoserine. The span at 204 to 214 (GVPVTPGPTET) shows a compositional bias: low complexity. A compositionally biased stretch (basic and acidic residues) spans 215 to 224 (EPAKVAEGEK). One can recognise a Protein kinase domain in the interval 312–567 (LNSKEALGGG…AAQCLAHPWL (256 aa)). Residues 318 to 326 (LGGGKFGAV) and lysine 341 each bind ATP. Residue aspartate 433 is the Proton acceptor of the active site. Threonine 472 bears the Phosphothreonine mark. The calmodulin-binding stretch occupies residues 601 to 613 (IAVSAANRFKKIS).

Belongs to the protein kinase superfamily. CAMK Ser/Thr protein kinase family. As to quaternary structure, may interact with centrin.

It is found in the cytoplasm. The enzyme catalyses L-seryl-[myosin light chain] + ATP = O-phospho-L-seryl-[myosin light chain] + ADP + H(+). It carries out the reaction L-threonyl-[myosin light chain] + ATP = O-phospho-L-threonyl-[myosin light chain] + ADP + H(+). Implicated in the level of global muscle contraction and cardiac function. Phosphorylates a specific serine in the N-terminus of a myosin light chain. This is Myosin light chain kinase 2, skeletal/cardiac muscle (MYLK2) from Bos taurus (Bovine).